The following is a 743-amino-acid chain: MYHPNMFESHHMFDMTPKSTSDNDLGITGSREDDFETKSGTEVTTENPSGEELQDPSQRPNKKKRYHRHTQRQIQELESFFKECPHPDDKQRKELSRDLNLEPLQVKFWFQNKRTQMKAQSERHENQILKSDNDKLRAENNRYKEALSNATCPNCGGPAAIGEMSFDEQHLRIENARLREEIDRISAIAAKYVGKPLGSSFAPLAIHAPSRSLDLEVGNFGNQTGFVGEMYGTGDILRSVSIPSETDKPIIVELAVAAMEELVRMAQTGDPLWLSTDNSVEILNEEEYFRTFPRGIGPKPLGLRSEASRQSAVVIMNHINLVEILMDVNQWSCVFSGIVSRALTLEVLSTGVAGNYNGALQVMTAEFQVPSPLVPTRENYFVRYCKQHSDGSWAVVDVSLDSLRPSTPILRTRRRPSGCLIQELPNGYSKVTWIEHMEVDDRSVHNMYKPLVQSGLAFGAKRWVATLERQCERLASSMASNIPGDLSVITSPEGRKSMLKLAERMVMSFCSGVGASTAHAWTTMSTTGSDDVRVMTRKSMDDPGRPPGIVLSAATSFWIPVAPKRVFDFLRDENSRKEWDILSNGGMVQEMAHIANGHEPGNCVSLLRVNSGNSSQSNMLILQESCTDASGSYVIYAPVDIVAMNVVLSGGDPDYVALLPSGFAILPDGSVGGGDGNQHQEMVSTTSSGSCGGSLLTVAFQILVDSVPTAKLSLGSVATVNSLIKCTVERIKAAVSCDVGGGA.

A disordered region spans residues 1–72 (MYHPNMFESH…KKRYHRHTQR (72 aa)). Residues 30-39 (SREDDFETKS) are compositionally biased toward basic and acidic residues. Over residues 60 to 71 (PNKKKRYHRHTQ) the composition is skewed to basic residues. Positions 62 to 121 (KKKRYHRHTQRQIQELESFFKECPHPDDKQRKELSRDLNLEPLQVKFWFQNKRTQMKAQS) form a DNA-binding region, homeobox. Positions 110 to 192 (FQNKRTQMKA…DRISAIAAKY (83 aa)) form a coiled coil. Positions 244–476 (SETDKPIIVE…LERQCERLAS (233 aa)) constitute an START domain.

The protein belongs to the HD-ZIP homeobox family. Class IV subfamily. In terms of assembly, interacts with GAI/RGA2, RGA/RGA1/GRS, RGL2/SCL19 and ATML1. Binds to AIL7/PLT7, ANT, BBM and AIL1. In terms of tissue distribution, specifically expressed in the layer 1 (L1) of shoot meristems.

It localises to the nucleus. In terms of biological role, probable transcription factor that binds to the L1 box DNA sequence 5'-TAAATG[CT]A-3'. Plays a role in maintaining the identity of L1 cells, possibly by interacting with their L1 box or other target-gene promoters; binds to the LIP1 gene promoter and stimulates its expression upon imbibition. Acts as a positive regulator of gibberellins (GAs)-regulated epidermal gene expression (e.g. LIP1, LIP2, LTP1, FDH and PDF1). Functionally redundant to ATML1. Involved, together with HDG proteins (e.g. HDG1, HDG2, HDG5 and HDG12), in the regulation of flower organs development by promoting the expression of APETALA 3 (AP3) in the epidermis and internal cell layers of developing flowers. Seems to promote cell differentiation. This chain is Homeobox-leucine zipper protein PROTODERMAL FACTOR 2, found in Arabidopsis thaliana (Mouse-ear cress).